We begin with the raw amino-acid sequence, 204 residues long: Translation initiation factor 2 subunit beta (204 aa).

The TRAM domain occupies 146 to 204 (NLEEGQVLDVEIQSLSKRGDGVVKMGRYIMYVSNAKPGQSVKIKISRISGSIVFTERAE).

Belongs to the eIF-2-beta/eIF-5 family. In terms of assembly, heterotrimer composed of an alpha, a beta and a gamma chain.

EIF-2 functions in the early steps of protein synthesis by forming a ternary complex with GTP and initiator tRNA. This is Translation initiation factor 2 subunit beta from Methanoregula boonei (strain DSM 21154 / JCM 14090 / 6A8).